Consider the following 201-residue polypeptide: Glycerol-3-phosphate acyltransferase (201 aa).

A run of 5 helical transmembrane segments spans residues 5–25 (LLGA…FGVV), 55–75 (KMGV…ILVA), 87–107 (FWVT…VWLG), 118–138 (LGIF…GYAV), and 164–184 (TYGP…LIFV).

This sequence belongs to the PlsY family. As to quaternary structure, probably interacts with PlsX.

The protein localises to the cell inner membrane. It catalyses the reaction an acyl phosphate + sn-glycerol 3-phosphate = a 1-acyl-sn-glycero-3-phosphate + phosphate. Its pathway is lipid metabolism; phospholipid metabolism. Functionally, catalyzes the transfer of an acyl group from acyl-phosphate (acyl-PO(4)) to glycerol-3-phosphate (G3P) to form lysophosphatidic acid (LPA). This enzyme utilizes acyl-phosphate as fatty acyl donor, but not acyl-CoA or acyl-ACP. The chain is Glycerol-3-phosphate acyltransferase from Anaeromyxobacter dehalogenans (strain 2CP-1 / ATCC BAA-258).